Reading from the N-terminus, the 165-residue chain is Large ribosomal subunit protein uL10 (165 aa).

The protein belongs to the universal ribosomal protein uL10 family. Part of the ribosomal stalk of the 50S ribosomal subunit. The N-terminus interacts with L11 and the large rRNA to form the base of the stalk. The C-terminus forms an elongated spine to which L12 dimers bind in a sequential fashion forming a multimeric L10(L12)X complex.

In terms of biological role, forms part of the ribosomal stalk, playing a central role in the interaction of the ribosome with GTP-bound translation factors. The sequence is that of Large ribosomal subunit protein uL10 from Burkholderia cenocepacia (strain HI2424).